Here is a 718-residue protein sequence, read N- to C-terminus: Sodium/myo-inositol cotransporter (718 aa).

Residues 1–9 (MRAVLETAD) lie on the Extracellular side of the membrane. The helical transmembrane segment at 10-29 (IAIVALYFILVMCIGFFAMW) threads the bilayer. Residues 30–38 (KSNRSTVSG) are Cytoplasmic-facing. A helical membrane pass occupies residues 39-57 (YFLAGRSMTWVAIGASLFV). Over 58–86 (SNIGSEHFIGLAGSGAASGFAVGAWEFNA) the chain is Extracellular. The helical transmembrane segment at 87 to 110 (LLLLQLLGWVFIPIYIRSGVYTMP) threads the bilayer. Topologically, residues 111 to 123 (EYLSKRFGGHRIQ) are cytoplasmic. The chain crosses the membrane as a helical span at residues 124-144 (VYFAALSLILYIFTKLSVDLY). The Extracellular segment spans residues 145–157 (SGALFIQESLGWN). The chain crosses the membrane as a helical span at residues 158 to 183 (LYVSVILLIGMTALLTVTGGLVAVIY). The Cytoplasmic portion of the chain corresponds to 184–186 (TDT). A helical transmembrane segment spans residues 187–205 (LQALLMIVGALTLMIISMM). At 206–303 (EIGGFEEVKR…HAKGSTLMAG (98 aa)) the chain is on the extracellular side. An N-linked (GlcNAc...) asparagine glycan is attached at Asn-232. Residues 304 to 324 (FLKLLPMFIIVVPGMISRILF) form a helical membrane-spanning segment. The Cytoplasmic segment spans residues 325 to 353 (ADDIACINPEHCMQVCGSRAGCSNIAYPR). The helical transmembrane segment at 354–376 (LVMKLVPVGLRGLMMAVMIAALM) threads the bilayer. Topologically, residues 377-406 (SDLDSIFNSASTIFTLDVYKLIRRSASSRE) are extracellular. A helical membrane pass occupies residues 407–430 (LMIVGRIFVAFMVVISIAWVPIIV). The Cytoplasmic segment spans residues 431 to 443 (EMQGGQMYLYIQE). The helical transmembrane segment at 444–462 (VADYLTPPVAALFLLAIFW) threads the bilayer. Residues 463–510 (KRCNEQGAFYGGMAGFVLGAVRLTLAFAYRAPECDQPDNRPGFIKDIH) lie on the Extracellular side of the membrane. A helical transmembrane segment spans residues 511–532 (YMYVATALFWVTGLITVIVSLL). Over 533 to 695 (TPPPTKEQIR…QMLEEPPQVK (163 aa)) the chain is Cytoplasmic. A phosphoserine mark is found at Ser-594 and Ser-632. A helical membrane pass occupies residues 696–716 (LILNIGLFAVCSLGIFMFVYF). Residues 717–718 (SL) lie on the Extracellular side of the membrane.

Belongs to the sodium:solute symporter (SSF) (TC 2.A.21) family. As to quaternary structure, interacts with KCNQ2 (via the pore module). Interacts with KCNQ1; this interaction is direct. Forms coregulatory complexes with ion channels KCNQ2-KCNQ3 and KCNQ1-KCNE2. In terms of tissue distribution, kidney cortex and medulla.

Its subcellular location is the apical cell membrane. It is found in the basolateral cell membrane. The enzyme catalyses myo-inositol(out) + 2 Na(+)(out) = myo-inositol(in) + 2 Na(+)(in). It catalyses the reaction scyllo-inositol(out) + 2 Na(+)(out) = scyllo-inositol(in) + 2 Na(+)(in). Its activity is regulated as follows. Inhibited by phlorizin and phloretin. Its function is as follows. Electrogenic Na(+)-coupled sugar symporter that actively transports myo-inositol and its stereoisomer scyllo-inositol across the plasma membrane, with a Na(+) to sugar coupling ratio of 2:1. Maintains myo-inositol concentration gradient that defines cell volume and fluid balance during osmotic stress, in particular in the fetoplacental unit and central nervous system. Forms coregulatory complexes with voltage-gated K(+) ion channels, allosterically altering ion selectivity, voltage dependence and gating kinetics of the channel. In turn, K(+) efflux through the channel forms a local electrical gradient that modulates electrogenic Na(+)-coupled myo-inositol influx through the transporter. Associates with KCNQ1-KCNE2 channel in the apical membrane of choroid plexus epithelium and regulates the myo-inositol gradient between blood and cerebrospinal fluid with an impact on neuron excitability. Associates with KCNQ2-KCNQ3 channel altering ion selectivity, increasing Na(+) and Cs(+) permeation relative to K(+) permeation. Provides myo-inositol precursor for biosynthesis of phosphoinositides such as PI(4,5)P2, thus indirectly affecting the activity of phosphoinositide-dependent ion channels and Ca(2+) signaling upon osmotic stress. Has very low affinity for sugars such as L-fucose and L-xylose, with an affinity about three orders of magnitude lower than myo-inositol. The polypeptide is Sodium/myo-inositol cotransporter (SLC5A3) (Canis lupus familiaris (Dog)).